A 412-amino-acid polypeptide reads, in one-letter code: Divalent metal cation transporter MntH (412 aa).

11 consecutive transmembrane segments (helical) span residues 19–39 (LALMGPAFIAAIGYIDPGNFA), 46–66 (ASFGYQLLWVVVWANLMAMLI), 94–114 (VWFYWVQAEIIAMATDLAEFI), 122–142 (LILGVSLLQGAVLTGIATFLI), 156–176 (VIGGLLLFVAAAYIVELFFSQ), 196–216 (AVFLAAGVLGATIMPHVIYLH), 241–261 (IAMTIAGFVNLAMMATAAAAF), 290–310 (IFGLSLVAAGLSSTVVGTLAG), 322–342 (IPLWVRRAVTMAPSFIVILMG), 348–368 (ILVMSQVLLSFGIALALVPLL), and 392–412 (AIVVLVVALNIWLLVGTALGL).

Belongs to the NRAMP family.

The protein localises to the cell inner membrane. H(+)-stimulated, divalent metal cation uptake system. This chain is Divalent metal cation transporter MntH, found in Cronobacter sakazakii (strain ATCC BAA-894) (Enterobacter sakazakii).